The primary structure comprises 991 residues: Adhesion G-protein coupled receptor F3 (991 aa).

An N-terminal signal peptide occupies residues 1 to 20 (MSSLALSQLLLAVTLPLLEL). The Extracellular segment spans residues 21 to 694 (EPTFVPTAQS…ENPTLDLLSQ (674 aa)). Residues N75, N102, N118, N321, N362, N484, N571, N589, N630, and N660 are each glycosylated (N-linked (GlcNAc...) asparagine). Residues 519–684 (HPFSFSSANV…SILMSQHTVP (166 aa)) enclose the GAIN-B domain. Disulfide bonds link C635–C666 and C654–C668. Residues 635 to 684 (CVFWDHRVFQGQGGWSDEGCEVHAANASITQCICQHLTAFSILMSQHTVP) are GPS. A helical transmembrane segment spans residues 695–715 (VGTGASVLALLVCLAIYGLVW). The Cytoplasmic portion of the chain corresponds to 716–730 (RVVVRNKVAFFRHTT). The helical transmembrane segment at 731–751 (LFNMVICLLVADTCFLGSPFL) threads the bilayer. The Extracellular segment spans residues 752-757 (PSGYHS). The chain crosses the membrane as a helical span at residues 758–778 (LICLVTAFLCHFFYLATFFWM). Over 779 to 799 (LAQALVLAHQLLFVFHQLSKH) the chain is Cytoplasmic. The helical transmembrane segment at 800-820 (VVLSLMVMLGYLCPLGFAGVT) threads the bilayer. At 821 to 850 (LGLYLPQRKYLWEGKCFLNGGGVMLYSFSE) the chain is on the extracellular side. The chain crosses the membrane as a helical span at residues 851–871 (PVLAIVGVNGLVLVIAVLKLL). Over 872–892 (RPSLSEGPTVEKRQALVGVLK) the chain is Cytoplasmic. The helical transmembrane segment at 893–913 (ALLILTPIFGLTWGLGVATLF) threads the bilayer. Topologically, residues 914-916 (DGS) are extracellular. Residues 917-937 (IVSHYAFSILNSLQGVFILVF) traverse the membrane as a helical segment. Residues 938-991 (GCLTDKKVLEALRKRLRGSRSSNSAISMVTNETYTSEHSKERSEPASYEERMTD) lie on the Cytoplasmic side of the membrane. The tract at residues 964–991 (SMVTNETYTSEHSKERSEPASYEERMTD) is disordered. Over residues 972–991 (TSEHSKERSEPASYEERMTD) the composition is skewed to basic and acidic residues.

The protein belongs to the G-protein coupled receptor 2 family. Adhesion G-protein coupled receptor (ADGR) subfamily. As to quaternary structure, heterodimer of 2 chains generated by proteolytic processing; the large extracellular N-terminal fragment and the membrane-bound C-terminal fragment predominantly remain associated and non-covalently linked. Autoproteolytically processed at the GPS region of the GAIN-B domain; this cleavage modulates receptor activity. As to expression, expression is restricted to testis and circumvallate papillae.

The protein resides in the membrane. Orphan receptor. This chain is Adhesion G-protein coupled receptor F3 (ADGRF3), found in Mus musculus (Mouse).